The chain runs to 518 residues: F-box protein At1g47056 (518 aa).

Residues 37–82 (PDYTSSLPDECLALVFQFLNSGNRKRCALVCRRWMIVEGQNRYRLS) form the F-box domain.

The sequence is that of F-box protein At1g47056 from Arabidopsis thaliana (Mouse-ear cress).